We begin with the raw amino-acid sequence, 139 residues long: Trafficking protein particle complex subunit 2-like protein (139 aa).

It belongs to the TRAPP small subunits family. Sedlin subfamily.

It is found in the cytoplasm. The protein resides in the perinuclear region. It localises to the endoplasmic reticulum. Its subcellular location is the golgi apparatus. Its function is as follows. May play a role in vesicular transport from endoplasmic reticulum to Golgi. This Xenopus tropicalis (Western clawed frog) protein is Trafficking protein particle complex subunit 2-like protein (trappc2l).